A 434-amino-acid chain; its full sequence is Double-stranded RNA-binding protein 2 (434 aa).

DRBM domains are found at residues 1 to 70 (MYKN…ALSN) and 87 to 155 (VYKN…SLKQ). Positions 402–434 (EKTASKETERAEFKDSSKGEPETARERLENLKI) are disordered.

As to quaternary structure, heterodimer with DRB1 or DRB5. Interacts with DCL1 and DCL5.

It localises to the cytoplasm. Its function is as follows. Binds double-stranded RNA. May be involved in RNA-mediated silencing. The protein is Double-stranded RNA-binding protein 2 (DRB2) of Arabidopsis thaliana (Mouse-ear cress).